Here is a 543-residue protein sequence, read N- to C-terminus: MLTLLNLLSAVALLVWGTHIVRTGVMRVFGARLRTVLSRSVEKKPLAFCAGIGVTALVQSSNATTMLVTSFVAQDLVALAPALVIVLGADVGTALMARILTFDLSWLSPLLIFIGVIFFLGRKQSRAGQLGRVGIGLGLILLALELIVQAVTPITQANGVQVIFASLTGDILLDALIGAMFAIISYSSLAAVLLTATLTAAGIISFPVALCLVIGANLGSGLLAMLNNSAANAAARRVALGSLLFKLVGSLIILPFVHLLAETMGKLSLPKAELVIYFHVFYNLVRCLAMLPFVDPMARFCKTIIRDEPELDTQLRPKHLDVSALDTPTLALANAARETLRIGDAMEQMMEGLNKVMHGEPRQEKELRKLADDINVLYTAIKLYLARMPKEELAEEESRRWAEIIEMSLNLEQASDIVERMSSEIADKSLAARRAFSLDGLKELDALYEQLLSNLKLAMSVFFSGDVTSARRLRRSKHRFRILNRRYSHAHVDRLHQQNVQSIETSSLHLGLLGDMQRLNSLFCSVAYSVLEQPDEDEGRDEY.

9 helical membrane passes run 1 to 21 (MLTL…THIV), 48 to 68 (FCAG…TMLV), 76 to 96 (LVAL…TALM), 99 to 119 (ILTF…VIFF), 134 to 154 (GIGL…VTPI), 175 to 195 (ALIG…VLLT), 196 to 216 (ATLT…VIGA), 240 to 260 (LGSL…VHLL), and 274 to 294 (LVIY…LPFV).

It belongs to the YjbB family.

Its subcellular location is the cell inner membrane. It carries out the reaction phosphate(in) = phosphate(out). Might be involved in phosphate export. This Escherichia coli O157:H7 protein is Putative inorganic phosphate export protein YjbB (yjbB).